The primary structure comprises 84 residues: Kappa-scoloptoxin(11)-Ssm3a (84 aa).

An N-terminal signal peptide occupies residues 1-16; sequence MSWMFYSFIVFTLAIK.

The protein belongs to the scoloptoxin-11 family. In terms of processing, contains 2 disulfide bonds. Expressed by the venom gland.

Its subcellular location is the secreted. Inhibits voltage-gated potassium channel currents in DRG neurons. 200 nM of the toxin inhibits current amplitude by only 25% and even at concentrations up to 5 uM, the toxin does not inhibit all potassium currents. In vivo, insects injected with this toxin showed signs of neurotoxicity including twitching, paralysis, and body contraction. The sequence is that of Kappa-scoloptoxin(11)-Ssm3a from Scolopendra mutilans (Chinese red-headed centipede).